The chain runs to 238 residues: Sugar fermentation stimulation protein homolog (238 aa).

This sequence belongs to the SfsA family.

The chain is Sugar fermentation stimulation protein homolog from Klebsiella pneumoniae subsp. pneumoniae (strain ATCC 700721 / MGH 78578).